The sequence spans 141 residues: Probable trafficking protein particle complex subunit 2 (141 aa).

It belongs to the TRAPP small subunits family. Sedlin subfamily. In terms of assembly, part of the multisubunit TRAPP (transport protein particle) complex.

It localises to the cytoplasm. Its subcellular location is the perinuclear region. The protein localises to the endoplasmic reticulum. The protein resides in the golgi apparatus. Functionally, may play a role in vesicular transport from endoplasmic reticulum to Golgi. Required for the systemic spread of the RNAi response. This chain is Probable trafficking protein particle complex subunit 2 (sedl-1), found in Caenorhabditis elegans.